Here is a 572-residue protein sequence, read N- to C-terminus: DNA polymerase (572 aa).

The interval 1 to 222 is 3'-5' exonuclease and strand displacement activities; sequence MPRKMYSCDF…LGLDKEVRYA (222 aa). The segment at 56–66 is interaction with the primer terminal protein; the sequence is YFHNLKFDGAF. The Mg(2+) site is built by D142 and D166. Positions 223–226 are DNA-binding; Involved in the formation of a stable complex between TP and phi29 DNA polymerase; it reads YRGG. The tract at residues 227-572 is initiation, polymerization and pyrophosphorolytic activities; it reads FTWLNDRFKE…VLVDDTFTIK (346 aa). Residues D246 and V247 each coordinate Mg(2+). Positions 251, 368, and 380 each coordinate 5-methyl-UTP. D453 and D455 together coordinate Mg(2+). Residue D455 coordinates 5-methyl-UTP.

The protein belongs to the DNA polymerase type-B family. In terms of assembly, interacts with the primer terminal protein; this interaction allows the initiation of TP-primed DNA replication at both viral DNA ends. Interacts with DNA. Mg(2+) is required as a cofactor.

It carries out the reaction DNA(n) + a 2'-deoxyribonucleoside 5'-triphosphate = DNA(n+1) + diphosphate. Polymerase responsible for protein-primed viral DNA replication by strand displacement with high processivity and fidelity. To start replication, the DNA polymerase forms a heterodimer with a free primer terminal protein (TP), recognizes the replication origins at both 5' ends of the linear chromosome, and initiates replication using as primer the OH-group of Ser-232 of the TP. This polymerase possesses three enzymatic activities: DNA synthesis (polymerase), primer terminal protein (TP) deoxynucleotidylation, which is the formation of a covalent linkage (phosphoester) between the hydroxyl group of a specific serine residue in TP and 5'-dAMP, a reaction directed by the second T at the 3' end, and 3' to 5' exonuclease activity. Exonuclease activity has a proofreading purpose. The polypeptide is DNA polymerase (2) (Bacillus subtilis (Bacteriophage PZA)).